A 108-amino-acid chain; its full sequence is RNA silencing suppressor (108 aa).

The tract at residues 47–50 is basic; sequence RRRR. Residues 57–78 form a C4-type zinc finger; it reads CHRCYRLWPPTVFTTRCDNKHC.

Belongs to the carlaviruses nucleic acid-binding protein family.

Functionally, suppressor of viral-induced RNA silencing. Increases the accumulation of viral RNA and enhances viral cell-to-cell movement by inhibiting RNA silencing. The chain is RNA silencing suppressor from Solanum tuberosum (Potato).